A 200-amino-acid polypeptide reads, in one-letter code: Phospholipase A2 inhibitor LNF2 (200 aa).

Residues 1–19 (MKSLHTICLLFIFVARGNS) form the signal peptide. 8 disulfide bridges follow: Cys22–Cys46, Cys25–Cys32, Cys39–Cys67, Cys73–Cys94, Cys95–Cys100, Cys118–Cys143, Cys136–Cys165, and Cys169–Cys191. Asn176 is a glycosylation site (N-linked (GlcNAc...) asparagine).

It belongs to the CNF-like-inhibitor family. Occurs as a mixture of oligomers. Tetrameric arrangement appears to be the predominant quaternary structure. In terms of tissue distribution, expressed by the liver.

Its subcellular location is the secreted. Functionally, inhibits the enzymatic activity of phospholipase A2 (PA2). This Lachesis muta muta (Bushmaster) protein is Phospholipase A2 inhibitor LNF2.